The primary structure comprises 143 residues: Hemoglobin subunit alpha-1 (143 aa).

Serine 2 bears the N-acetylserine mark. In terms of domain architecture, Globin spans serine 2–arginine 143. O2 is bound at residue histidine 60. Histidine 89 provides a ligand contact to heme b.

This sequence belongs to the globin family. Hb1 is a heterotetramer of two alpha-1 chains and two beta-1 chains. In terms of tissue distribution, red blood cells.

In terms of biological role, involved in oxygen transport from gills to the various peripheral tissues. The polypeptide is Hemoglobin subunit alpha-1 (Liparis tunicatus (Kelp snailfish)).